A 240-amino-acid polypeptide reads, in one-letter code: MPRNAHFRFKQFTVRQDQCAMKVCTDACVLGAWADVEDADRILDIGAGTGLLSLMVAQRNTYAMIDAVEIDAEAFYQAGENVEQSPFHDRITLFHSAVQEFVSEHRYDVIITNPPFFQSDLLSPIDKKNIAHHAKSLDFEELLTAIERLLKPEGKFNILFPVDEGSRFAEKAAHAGWKLTRKLTLFHQEDKKAFRLLMRFERAEVAHNVIVEPDLYIYEKDGVTHDPRFRELLKAFYLKF.

It belongs to the methyltransferase superfamily. tRNA (adenine-N(6)-)-methyltransferase family.

It is found in the cytoplasm. It carries out the reaction adenosine(37) in tRNA1(Val) + S-adenosyl-L-methionine = N(6)-methyladenosine(37) in tRNA1(Val) + S-adenosyl-L-homocysteine + H(+). Its function is as follows. Specifically methylates the adenine in position 37 of tRNA(1)(Val) (anticodon cmo5UAC). This chain is tRNA1(Val) (adenine(37)-N6)-methyltransferase, found in Dyadobacter fermentans (strain ATCC 700827 / DSM 18053 / CIP 107007 / KCTC 52180 / NS114).